The chain runs to 57 residues: UPF0391 membrane protein Arad_3976 (57 aa).

2 helical membrane passes run 4–24 and 33–53; these read WAII…SGVS and VLFA…VMAG.

Belongs to the UPF0391 family.

It localises to the cell membrane. The protein is UPF0391 membrane protein Arad_3976 of Rhizobium rhizogenes (strain K84 / ATCC BAA-868) (Agrobacterium radiobacter).